The following is an 882-amino-acid chain: Valine--tRNA ligase (882 aa).

The 'HIGH' region signature appears at 50-60; sequence PNVTGKLHLGH. The 'KMSKS' region signature appears at 526 to 530; sequence KMSKS. Lys529 provides a ligand contact to ATP. Positions 810–881 form a coiled coil; it reads LEALIDLDLE…VLERIETLKE (72 aa).

The protein belongs to the class-I aminoacyl-tRNA synthetase family. ValS type 1 subfamily. Monomer.

Its subcellular location is the cytoplasm. The enzyme catalyses tRNA(Val) + L-valine + ATP = L-valyl-tRNA(Val) + AMP + diphosphate. Functionally, catalyzes the attachment of valine to tRNA(Val). As ValRS can inadvertently accommodate and process structurally similar amino acids such as threonine, to avoid such errors, it has a 'posttransfer' editing activity that hydrolyzes mischarged Thr-tRNA(Val) in a tRNA-dependent manner. The sequence is that of Valine--tRNA ligase from Listeria innocua serovar 6a (strain ATCC BAA-680 / CLIP 11262).